The chain runs to 456 residues: Bifunctional protein GlmU (456 aa).

The pyrophosphorylase stretch occupies residues 1 to 229; sequence MLNNAMSVVI…LSEVEGVNNR (229 aa). Residues 11 to 14, Lys25, Gln76, 81 to 82, 103 to 105, Gly140, Glu154, Asn169, and Asn227 each bind UDP-N-acetyl-alpha-D-glucosamine; these read LAAG, GT, and YGD. Asp105 contacts Mg(2+). Asn227 is a binding site for Mg(2+). Residues 230-250 form a linker region; sequence LQLSRLERVYQSEQAEKLLLA. Positions 251–456 are N-acetyltransferase; it reads GVMLRDPARF…EGWRRPVKKK (206 aa). Residues Arg333 and Lys351 each coordinate UDP-N-acetyl-alpha-D-glucosamine. His363 acts as the Proton acceptor in catalysis. The UDP-N-acetyl-alpha-D-glucosamine site is built by Tyr366 and Asn377. Acetyl-CoA is bound by residues Ala380, 386-387, Ser405, Ala423, and Arg440; that span reads NY.

This sequence in the N-terminal section; belongs to the N-acetylglucosamine-1-phosphate uridyltransferase family. The protein in the C-terminal section; belongs to the transferase hexapeptide repeat family. In terms of assembly, homotrimer. Mg(2+) is required as a cofactor.

Its subcellular location is the cytoplasm. The enzyme catalyses alpha-D-glucosamine 1-phosphate + acetyl-CoA = N-acetyl-alpha-D-glucosamine 1-phosphate + CoA + H(+). It catalyses the reaction N-acetyl-alpha-D-glucosamine 1-phosphate + UTP + H(+) = UDP-N-acetyl-alpha-D-glucosamine + diphosphate. Its pathway is nucleotide-sugar biosynthesis; UDP-N-acetyl-alpha-D-glucosamine biosynthesis; N-acetyl-alpha-D-glucosamine 1-phosphate from alpha-D-glucosamine 6-phosphate (route II): step 2/2. It functions in the pathway nucleotide-sugar biosynthesis; UDP-N-acetyl-alpha-D-glucosamine biosynthesis; UDP-N-acetyl-alpha-D-glucosamine from N-acetyl-alpha-D-glucosamine 1-phosphate: step 1/1. The protein operates within bacterial outer membrane biogenesis; LPS lipid A biosynthesis. Functionally, catalyzes the last two sequential reactions in the de novo biosynthetic pathway for UDP-N-acetylglucosamine (UDP-GlcNAc). The C-terminal domain catalyzes the transfer of acetyl group from acetyl coenzyme A to glucosamine-1-phosphate (GlcN-1-P) to produce N-acetylglucosamine-1-phosphate (GlcNAc-1-P), which is converted into UDP-GlcNAc by the transfer of uridine 5-monophosphate (from uridine 5-triphosphate), a reaction catalyzed by the N-terminal domain. This is Bifunctional protein GlmU from Escherichia coli O45:K1 (strain S88 / ExPEC).